The following is a 476-amino-acid chain: Thymidine phosphorylase (476 aa).

Over residues 1 to 11 (MAAPGTPPPLA) the composition is skewed to pro residues. Residues 1–26 (MAAPGTPPPLAPETAGADSGGGSGEH) form a disordered region. T6 and T475 each carry phosphothreonine.

The protein belongs to the thymidine/pyrimidine-nucleoside phosphorylase family. As to quaternary structure, homodimer.

It catalyses the reaction thymidine + phosphate = 2-deoxy-alpha-D-ribose 1-phosphate + thymine. The protein operates within pyrimidine metabolism; dTMP biosynthesis via salvage pathway; dTMP from thymine: step 1/2. Its function is as follows. Catalyzes the reversible phosphorolysis of thymidine. The produced molecules are then utilized as carbon and energy sources or in the rescue of pyrimidine bases for nucleotide synthesis. This Rattus norvegicus (Rat) protein is Thymidine phosphorylase (Tymp).